A 182-amino-acid chain; its full sequence is Adenine phosphoribosyltransferase (182 aa).

This sequence belongs to the purine/pyrimidine phosphoribosyltransferase family. In terms of assembly, homodimer.

It localises to the cytoplasm. The catalysed reaction is AMP + diphosphate = 5-phospho-alpha-D-ribose 1-diphosphate + adenine. It participates in purine metabolism; AMP biosynthesis via salvage pathway; AMP from adenine: step 1/1. Functionally, catalyzes a salvage reaction resulting in the formation of AMP, that is energically less costly than de novo synthesis. The sequence is that of Adenine phosphoribosyltransferase from Bordetella avium (strain 197N).